We begin with the raw amino-acid sequence, 5412 residues long: Mucin-4 (5412 aa).

An N-terminal signal peptide occupies residues 1–28 (MKGARWRRVPWVSLSCLCLCLLPHVVPG). 2 disordered regions span residues 40 to 87 (TAAP…TTSK) and 142 to 249 (TSTD…ATSS). The variable number of tandem repeats (VNTR) stretch occupies residues 43-4241 (PVTSTGSTTA…SVSTGHATPL (4199 aa)). Low complexity predominate over residues 142–163 (TSTDSTLGNTEETSTAGTESST). O-linked (GalNAc...) threonine glycosylation is found at Thr154 and Thr156. Residues 164-199 (PVTSAVSITAGQEGQSRTTSWRTSIQDTSASSQNHW) show a composition bias toward polar residues. Residues 200–223 (TRSTQTTRESQTSTLTHRTTSTPS) show a composition bias toward low complexity. Over residues 224–249 (FSPSVHNVTGTVSQKTSPSGETATSS) the composition is skewed to polar residues. Asn230 carries an N-linked (GlcNAc...) asparagine glycan. An O-linked (GalNAc...) threonine glycan is attached at Thr234. N-linked (GlcNAc...) asparagine glycosylation occurs at Asn255. 3 stretches are compositionally biased toward polar residues: residues 267–285 (TTST…SVPV), 306–328 (SPAT…HQTQ), and 358–367 (GFNPSGTVSQ). 16 disordered regions span residues 267–286 (TTST…VPVT), 303–328 (EGQS…HQTQ), 353–383 (LSSP…PSSV), 438–473 (LSPS…SFSP), 488–580 (WPSS…ALLS), 592–853 (TATS…ASAS), 868–963 (VPGT…SGSG), 983–1864 (SSAS…DASS), 1878–2078 (ASSV…TGHA), 2111–2220 (TALH…ASTG), 2232–2814 (SAST…TGHA), 2837–3306 (IPSS…SSVS), 3320–3580 (SAST…VSTG), 3592–3644 (SVST…VSTG), 3656–3756 (SVST…ASTG), and 3769–4223 (VSTG…GHAT). O-linked (GalNAc...) threonine glycosylation is found at Thr364, Thr369, and Thr376. Low complexity predominate over residues 368–383 (ETFPSGETTTSSPSSV). Polar residues-rich tracts occupy residues 450–459 (AFHTQQSEGA), 488–526 (WPSS…TGTA), and 546–557 (TTYSSHSTTLPK). Composition is skewed to low complexity over residues 558–577 (TTGA…TGEA) and 615–627 (STNH…TSTS). Residue Asn617 is glycosylated (N-linked (GlcNAc...) asparagine). 3 O-linked (GalNAc...) threonine glycosylation sites follow: Thr620, Thr666, and Thr688. Positions 628–677 (PQESPAVSQRGHTQAPQTTQESQTTRSVSPMTDTKTVTTPGSSFTASGHS) are enriched in polar residues. Positions 705–717 (TTQAPTTALQAAP) are enriched in low complexity. Positions 729–746 (GTSLSKTGALTLANSVVS) are enriched in polar residues. The O-linked (GalNAc...) threonine glycan is linked to Thr747. Residues 756 to 771 (TSASASTSPDTAAAMT) show a composition bias toward low complexity. A compositionally biased stretch (polar residues) spans 772–789 (HTHQAESTEASGQTQTSE). A compositionally biased stretch (low complexity) spans 790–828 (PASSGSRTTSAGTATPSSSGASGTTPSGSEGISTSGETT). Thr797, Thr798, Thr802, Thr804, Thr813, and Thr814 each carry an O-linked (GalNAc...) threonine glycan. The segment covering 829–852 (RFSSNPSRDSHTTQSTTELLSASA) has biased composition (polar residues). 3 O-linked (GalNAc...) threonine glycosylation sites follow: Thr881, Thr886, and Thr892. Residues 885 to 903 (PTGQSSPTSPSASPQETAA) are compositionally biased toward low complexity. The segment covering 907-928 (MAQTQRTRTSRGSDTISLASQA) has biased composition (polar residues). Positions 929-950 (TDTFSTVPPTPPSITSTGLTSP) are enriched in low complexity. O-linked (GalNAc...) threonine glycans are attached at residues Thr931, Thr934, Thr938, Thr943, Thr945, Thr948, Thr952, Thr954, Thr1003, Thr1007, Thr1012, Thr1019, Thr1022, Thr1023, Thr1028, Thr1030, Thr1035, Thr1039, Thr1044, Thr1051, Thr1055, Thr1060, Thr1062, Thr1067, Thr1071, Thr1076, Thr1083, Thr1086, Thr1087, Thr1092, Thr1094, Thr1099, Thr1103, Thr1108, Thr1110, Thr1115, Thr1118, Thr1119, Thr1124, Thr1126, Thr1131, Thr1135, Thr1172, Thr1179, Thr1182, Thr1183, Thr1188, Thr1195, Thr1199, Thr1204, Thr1236, Thr1243, Thr1246, and Thr1247. Residues 951 to 963 (QTETHTLSPSGSG) show a composition bias toward polar residues. Positions 1007–1024 (TPLPVTSPSSVSTGHTTP) are enriched in low complexity. A compositionally biased stretch (polar residues) spans 1028-1054 (TDTSSESTGHVTPLPVTSFSSASTGDS). Positions 1060–1086 (TDTSSASTGHVTPLPVTSLSSASTGDT) are enriched in polar residues. A compositionally biased stretch (polar residues) spans 1092 to 1118 (TDTSSASTGHATSLPVTDTSSVSTGHT). Polar residues-rich tracts occupy residues 1124–1150 (TDTS…TGHT) and 1157–1197 (DASS…STGH). 2 stretches are compositionally biased toward polar residues: residues 1204-1213 (TDTSSASTGH) and 1221-1246 (DASS…TGHT). The segment covering 1252–1262 (TDTSSASTGQA) has biased composition (polar residues). Over residues 1263–1279 (TSLLVTDTSSVSTGDTT) the composition is skewed to low complexity. Residues Thr1278, Thr1279, Thr1284, Thr1286, Thr1291, Thr1295, Thr1300, Thr1307, Thr1311, Thr1316, Thr1323, Thr1326, Thr1332, Thr1339, Thr1342, Thr1343, and Thr1348 are each glycosylated (O-linked (GalNAc...) threonine). Residues 1281–1325 (LPVTSTSSASTGHVTPLHVTSPSSASTGHATPLPVTSLSSASTGD) are compositionally biased toward polar residues. Residues 1332–1342 (TSPSSASTGDT) show a composition bias toward polar residues. Composition is skewed to polar residues over residues 1349-1358 (DASSVSTGHT) and 1365-1405 (DASS…STGH). 12 O-linked (GalNAc...) threonine glycosylation sites follow: Thr1380, Thr1387, Thr1390, Thr1391, Thr1396, Thr1403, Thr1407, Thr1412, Thr1444, Thr1451, Thr1454, and Thr1455. Composition is skewed to polar residues over residues 1412-1421 (TDTSSASTGH) and 1429-1454 (DASS…TGHT). The segment covering 1460-1470 (TDTSSASTGQA) has biased composition (polar residues). Over residues 1471 to 1487 (TSLLVTDTSSVSTGDTT) the composition is skewed to low complexity. O-linked (GalNAc...) threonine glycosylation is found at Thr1486, Thr1487, Thr1492, Thr1494, Thr1499, Thr1503, Thr1508, Thr1515, Thr1519, Thr1524, Thr1531, Thr1534, Thr1540, Thr1547, Thr1550, Thr1551, Thr1556, Thr1563, Thr1566, Thr1567, Thr1572, Thr1579, Thr1582, Thr1583, Thr1588, Thr1590, Thr1598, Thr1599, Thr1604, Thr1611, Thr1614, Thr1615, Thr1620, Thr1622, Thr1627, and Thr1630. The segment covering 1489 to 1533 (LPVTSTSSASTGHVTPLHVTSPSSASTGHATPLPVTSLSSASTGD) has biased composition (polar residues). Over residues 1540 to 1550 (TSPSSASTGDT) the composition is skewed to polar residues. Positions 1557–1582 (DASSVSTGHTTPLPVTSPSSASTGHT) are enriched in polar residues. The span at 1588 to 1614 (TDTSSASKGDTTPLPVTSPSSASTGHT) shows a compositional bias: polar residues. The segment covering 1620–1631 (TDTSSASTGDTT) has biased composition (low complexity). Over residues 1633–1661 (LPVTNASSLSTGHATPLHVTSPSSASTGH) the composition is skewed to polar residues. Residue Asn1637 is glycosylated (N-linked (GlcNAc...) asparagine). 24 O-linked (GalNAc...) threonine glycosylation sites follow: Thr1659, Thr1663, Thr1668, Thr1670, Thr1675, Thr1679, Thr1716, Thr1723, Thr1726, Thr1727, Thr1732, Thr1764, Thr1766, Thr1812, Thr1819, Thr1822, Thr1823, Thr1828, Thr1835, Thr1838, Thr1839, Thr1844, Thr1854, and Thr1855. The span at 1668–1679 (TSTSSASTGHAT) shows a compositional bias: low complexity. 3 stretches are compositionally biased toward polar residues: residues 1701 to 1741 (DVSS…STGH), 1749 to 1773 (DASS…STAH), and 1812 to 1822 (TSPSSASTGDT). The segment covering 1828–1840 (TDASSASTGDTTS) has biased composition (low complexity). Composition is skewed to polar residues over residues 1841–1864 (LPVT…DASS), 1892–1902 (TDTNSASTGDT), and 1909–1950 (DASS…SGHT). Thr1931, Thr1934, Thr1935, Thr1940, Thr1950, Thr1951, Thr1956, Thr1963, Thr1995, Thr1999, Thr2004, Thr2006, Thr2015, Thr2020, Thr2027, Thr2030, Thr2031, Thr2036, Thr2038, Thr2047, Thr2052, Thr2062, Thr2063, Thr2132, Thr2137, Thr2139, Thr2142, Thr2143, Thr2148, Thr2150, Thr2155, Thr2159, Thr2164, Thr2180, Thr2182, Thr2187, Thr2191, Thr2196, Thr2198, Thr2203, Thr2207, Thr2244, Thr2254, and Thr2255 each carry an O-linked (GalNAc...) threonine glycan. A compositionally biased stretch (polar residues) spans 1957–1981 (DASSVPTGHATSLPVTDASSVSTGH). Positions 2004–2030 (TDTSSVSTGQATPLPVTSLSSASTGDT) are enriched in polar residues. A compositionally biased stretch (polar residues) spans 2036 to 2077 (TDTSSASTGQDTPLPVTSLSSVSTGDTTPLPVTNPSSASTGH). The segment covering 2125–2146 (DTTPLPVTSPSSTSTGDTTPLP) has biased composition (low complexity). Over residues 2148-2189 (TETSSVSTGHATSLPVTDTSSASTGHATSLPVTDTSSASTGH) the composition is skewed to polar residues. Composition is skewed to polar residues over residues 2196–2219 (TDTS…SAST) and 2232–2254 (SAST…TGDT). Residues 2261–2270 (DASSVSTGHA) show a composition bias toward polar residues. Over residues 2271–2283 (TSLPVTSLSSVST) the composition is skewed to low complexity. O-linked (GalNAc...) threonine glycosylation is found at Thr2283, Thr2286, Thr2287, Thr2292, Thr2299, Thr2303, Thr2308, Thr2324, Thr2331, Thr2334, Thr2335, Thr2340, Thr2347, Thr2351, Thr2356, Thr2363, Thr2366, Thr2367, Thr2372, Thr2382, Thr2383, Thr2388, Thr2395, Thr2398, Thr2399, and Thr2406. Positions 2284–2301 (GDTTPLPVTSPSSASTGH) are enriched in polar residues. Residues 2309-2349 (DASSASTGHATPLPVTSLSSASTGDTTPLPVTSPSSASTGH) show a composition bias toward polar residues. Over residues 2366–2399 (TTPLPVTSSSSASSGHTTPLPVTDASSASTGDTT) the composition is skewed to low complexity. Polar residues-rich tracts occupy residues 2404–2413 (TDTSSASTGH) and 2421–2445 (GLSS…STGH). N-linked (GlcNAc...) asparagine glycosylation is present at Asn2437. O-linked (GalNAc...) threonine glycosylation is found at Thr2452, Thr2454, Thr2459, Thr2462, Thr2463, Thr2468, Thr2500, Thr2507, Thr2510, Thr2511, Thr2516, Thr2518, Thr2523, and Thr2526. Over residues 2452-2471 (TSTSSASTGDTTPLPGTDTS) the composition is skewed to low complexity. Polar residues predominate over residues 2485-2510 (DASSVSTGDTTRLPVTSPSSASTGHT). Over residues 2517–2573 (DTPSASTGDTTPLPVTNASSLSTRHATSLHVTSPSSASTGHATSLPVTDTSAASTGH) the composition is skewed to polar residues. The N-linked (GlcNAc...) asparagine glycan is linked to Asn2533. 24 O-linked (GalNAc...) threonine glycosylation sites follow: Thr2564, Thr2566, Thr2571, Thr2575, Thr2580, Thr2582, Thr2587, Thr2590, Thr2591, Thr2596, Thr2598, Thr2619, Thr2622, Thr2623, Thr2628, Thr2660, Thr2667, Thr2670, Thr2671, Thr2676, Thr2683, Thr2687, Thr2692, and Thr2694. Residues 2580 to 2591 (TSTSSASTGDTT) are compositionally biased toward low complexity. 2 stretches are compositionally biased toward polar residues: residues 2597-2637 (DTYS…STGH) and 2645-2691 (DASS…SLPV). Over residues 2692–2704 (TDTSSASTGDTTS) the composition is skewed to low complexity. A compositionally biased stretch (polar residues) spans 2705 to 2723 (LPVTDTSSAYTGDTTSLPV). Residues 2724-2735 (TDTSSSSTGDTT) are compositionally biased toward low complexity. O-linked (GalNAc...) threonine glycosylation is found at Thr2740, Thr2742, Thr2750, Thr2751, Thr2756, Thr2758, Thr2763, and Thr2767. The span at 2740 to 2750 (TETSSVSTGDT) shows a compositional bias: polar residues. Polar residues predominate over residues 2756–2798 (TDTSSASTGHATPLPVTNTSSVSTGHATPLHVTSPSSASTGHT). Asn2773 is a glycosylation site (N-linked (GlcNAc...) asparagine). O-linked (GalNAc...) threonine glycans are attached at residues Thr2779, Thr2783, Thr2788, Thr2795, Thr2798, Thr2799, and Thr2804. Composition is skewed to polar residues over residues 2805 to 2814 (DASSVSTGHA) and 2837 to 2846 (IPSSASSGHT). O-linked (GalNAc...) threonine glycosylation is found at Thr2846, Thr2847, and Thr2852. Residues 2853–2877 (DASSVSTGHATSLPVTDASSVSTGH) are compositionally biased toward polar residues. Residues 2895–2907 (TPLPLTSLSSVST) are compositionally biased toward low complexity. O-linked (GalNAc...) threonine glycosylation is found at Thr2910, Thr2911, Thr2916, Thr2918, Thr2923, Thr2927, Thr2932, Thr2939, Thr2942, Thr2943, Thr2948, Thr2950, Thr2955, Thr2959, Thr2966, Thr2971, and Thr2975. Positions 2916-2942 (TDTSSASTGQATPLPVTSLSSVSTGDT) are enriched in polar residues. The segment covering 2948–2973 (TDTSSASTGHATSLPVTDTSSASTGH) has biased composition (polar residues). Polar residues-rich tracts occupy residues 2980–2989 (TDTSSASTGH) and 3009–3037 (LPVT…STGH). Thr3023, Thr3028, Thr3035, and Thr3039 each carry an O-linked (GalNAc...) threonine glycan. Polar residues predominate over residues 3044–3069 (TDTSSASTGHANPLHVTSPSSASTGH). Residues Thr3071, Thr3076, Thr3078, Thr3083, Thr3087, Thr3092, Thr3099, Thr3102, Thr3103, Thr3108, Thr3115, Thr3118, Thr3119, Thr3124, Thr3126, Thr3131, Thr3135, Thr3140, Thr3142, Thr3147, Thr3150, Thr3151, Thr3156, Thr3158, Thr3163, Thr3167, Thr3172, Thr3179, Thr3182, Thr3183, Thr3188, Thr3220, Thr3227, Thr3230, Thr3231, Thr3236, Thr3243, Thr3247, Thr3252, and Thr3254 are each glycosylated (O-linked (GalNAc...) threonine). Over residues 3076-3118 (TDTSSASTGHATPLPVTSLSSVSTGDTTPLPVTSPSSASTGHT) the composition is skewed to polar residues. The segment covering 3124–3134 (TDTSSASTGQA) has biased composition (polar residues). The segment covering 3140 to 3151 (TSTSSASTGDTT) has biased composition (low complexity). 2 stretches are compositionally biased toward polar residues: residues 3156-3197 (TDTS…STGH) and 3205-3251 (DASS…SLPV). Residues 3252 to 3264 (TDTSSASTGDTTS) show a composition bias toward low complexity. Polar residues predominate over residues 3265 to 3283 (LPVTDTSSAYTGDTTSLPV). The segment covering 3284–3295 (TDTSSSSTGDTT) has biased composition (low complexity). O-linked (GalNAc...) threonine glycans are attached at residues Thr3294, Thr3332, Thr3339, Thr3342, Thr3343, Thr3348, Thr3350, Thr3355, and Thr3359. Over residues 3320–3337 (SASTGHATPLHVTSPSSA) the composition is skewed to polar residues. Over residues 3338–3356 (STGDTTPVPVTDTSSVSTG) the composition is skewed to low complexity. Polar residues-rich tracts occupy residues 3365-3374 (GLSSASTGDT) and 3381-3405 (DISS…STGD). Asn3397 is a glycosylation site (N-linked (GlcNAc...) asparagine). Thr3398, Thr3403, Thr3406, Thr3412, Thr3419, Thr3423, Thr3428, Thr3430, Thr3435, Thr3439, and Thr3444 each carry an O-linked (GalNAc...) threonine glycan. Polar residues predominate over residues 3412 to 3421 (TSPSSASTGH). Low complexity predominate over residues 3428–3471 (TSTSSASTGHATPVPVTSTSSASTGHTTPLPVTDTSSASTGDTT). Ser3445 carries an O-linked (GalNAc...) serine glycan. Thr3446, Thr3451, Thr3454, Thr3455, Thr3460, Thr3462, Thr3467, Thr3470, Thr3471, Thr3476, Thr3483, Thr3486, Thr3487, Thr3492, Thr3499, Thr3502, Thr3504, Thr3508, Thr3515, Thr3519, Thr3524, Thr3526, Thr3531, Thr3535, Thr3540, Thr3547, Thr3550, Thr3551, Thr3556, Thr3567, Thr3614, Thr3615, Thr3622, Thr3678, Thr3679, Thr3686, Thr3691, Thr3695, Thr3700, Thr3710, Thr3711, Thr3716, Thr3718, Thr3723, Thr3727, Thr3732, Thr3739, Thr3743, Thr3748, Thr3780, Thr3787, Thr3790, Thr3791, Thr3796, Thr3798, Thr3803, Thr3807, Thr3812, Thr3822, Thr3823, Thr3828, Thr3835, Thr3839, Thr3844, Thr3851, Thr3854, Thr3860, Thr3867, Thr3871, Thr3876, Thr3883, Thr3886, Thr3887, Thr3892, Thr3894, Thr3899, Thr3903, Thr3935, Thr3940, Thr3942, Thr3947, Thr3950, Thr3951, Thr3956, Thr3958, Thr3963, Thr3967, Thr3972, Thr3979, Thr3983, Thr3988, Thr3990, Thr3995, Thr3999, Thr4004, Thr4006, Thr4011, Thr4015, and Thr4020 each carry an O-linked (GalNAc...) threonine glycan. The segment covering 3473 to 3486 (LPVTSPSSASTGHT) has biased composition (polar residues). Over residues 3493-3517 (IPSSASTGDTSTLPVTGASSASTGH) the composition is skewed to polar residues. The segment covering 3524–3550 (TDTSSVSTGHATPLPVTSLSSVSTGDT) has biased composition (polar residues). Over residues 3557–3580 (DASSASTGQATPLPVTSLSSVSTG) the composition is skewed to polar residues. Over residues 3604–3615 (TDTSSASTGDTT) the composition is skewed to low complexity. Over residues 3620–3644 (TDTSSASTGQATPLPVTSLSSVSTG) the composition is skewed to polar residues. Positions 3668 to 3679 (TDTSSASTGDTT) are enriched in low complexity. The segment covering 3684–3694 (TDTSSASTGQA) has biased composition (polar residues). Positions 3710-3728 (TTPLPVTSTSSVSTGHVTP) are enriched in low complexity. Positions 3730-3741 (HVTSPSSASTGH) are enriched in polar residues. Residues 3780–3791 (TDASSASTGDTT) are compositionally biased toward low complexity. Positions 3796–3822 (TDTSSASTGQATPLPVTSLSSVSTGDT) are enriched in polar residues. Residues 3860-3869 (TSPSSASTGH) show a composition bias toward polar residues. The segment covering 3877–3886 (GLSSASTGDT) has biased composition (polar residues). The segment covering 3892–3901 (TDTSSASTRH) has biased composition (polar residues). Over residues 3940–3951 (TSTSSASTGDTT) the composition is skewed to low complexity. Over residues 3956 to 3981 (TDTSSVSTGHATSLPVTSRSSASTGH) the composition is skewed to polar residues. Residues 3988–3997 (TDTSSVSTGH) are compositionally biased toward polar residues. Positions 3999–4011 (TPLPVTSTSSVST) are enriched in low complexity. Polar residues predominate over residues 4018–4029 (PVTSPSSASTGH). O-linked (GalNAc...) serine glycans are attached at residues Ser4021, Ser4023, Ser4024, and Ser4026. Residues Thr4027, Thr4031, and Thr4036 are each glycosylated (O-linked (GalNAc...) threonine). The span at 4030 to 4047 (ATPVPVTSTSSASTGDTT) shows a compositional bias: low complexity. A glycan (O-linked (GalNAc...) serine) is linked at Ser4037. O-linked (GalNAc...) threonine glycosylation is found at Thr4038, Thr4043, Thr4046, and Thr4047. Positions 4049–4093 (LPVTNASSLSTGHATPLHVTSPSSASRGDTSTLPVTDASSASTGH) are enriched in polar residues. N-linked (GlcNAc...) asparagine glycosylation is present at Asn4053. O-linked (GalNAc...) threonine glycans are attached at residues Thr4078 and Thr4084. The segment covering 4095–4107 (TPLPLTSLSSVST) has biased composition (low complexity). Residues Thr4110, Thr4111, Thr4116, Thr4118, Thr4123, Thr4127, Thr4132, Thr4139, Thr4142, Thr4143, Thr4148, Thr4158, Thr4159, Thr4164, Thr4171, Thr4175, Thr4180, Thr4182, Thr4187, Thr4190, Thr4191, Thr4196, Thr4198, Thr4203, Thr4207, Thr4212, Thr4214, Thr4219, Thr4223, and Thr4239 are each glycosylated (O-linked (GalNAc...) threonine). Positions 4116–4142 (TDTSSASTGQATPLPVTSLSSVSTGDT) are enriched in polar residues. A compositionally biased stretch (polar residues) spans 4149–4173 (IPSSASSGHTTSLPVTDASSVSTGH). The segment covering 4180–4191 (TSTSSASTGDTT) has biased composition (low complexity). A compositionally biased stretch (polar residues) spans 4196–4205 (TDTSSASTGH). Positions 4212 to 4223 (TDTSSASTGHAT) are enriched in polar residues. Over residues 4242-4254 (AVSSATSASTVSS) the composition is skewed to low complexity. A disordered region spans residues 4242 to 4288 (AVSSATSASTVSSDSPLKMETPGMTTPSLKTDGGRRTATSPPPTTSQ). Residues Thr4272, Thr4278, Thr4280, Thr4289, Thr4293, and Thr4297 are each glycosylated (O-linked (GalNAc...) threonine). The region spanning 4397-4552 (PFWDDADFST…GLQFYRLHRE (156 aa)) is the NIDO domain. The 116-residue stretch at 4553 to 4668 (ERPNYRLECL…YLCALYQQRR (116 aa)) folds into the AMOP domain. The VWFD domain occupies 4680–4880 (QPAWMFGDPH…TWQINGTGLL (201 aa)). N-linked (GlcNAc...) asparagine glycosylation is found at Asn4715, Asn4768, Asn4787, Asn4796, Asn4831, Asn4852, Asn4875, Asn4902, Asn4928, Asn4946, Asn4982, Asn4997, Asn5045, Asn5052, Asn5100, and Asn5119. The 40-residue stretch at 5118 to 5157 (QNQSCPVNYCYNQGHCYISQTLGCQPMCTCPPAFTDSRCF) folds into the EGF-like 1 domain. 3 disulfide bridges follow: Cys5122–Cys5133, Cys5127–Cys5145, and Cys5147–Cys5156. Residues Asn5185, Asn5192, and Asn5292 are each glycosylated (N-linked (GlcNAc...) asparagine). Residues 5321 to 5360 (VSPCSRGYCDHGGQCQHLPSGPRCSCVSFSIYTAWGEHCE) form the EGF-like 2 domain. Disulfide bonds link Cys5324-Cys5335, Cys5329-Cys5344, and Cys5346-Cys5359. Residues 5369-5389 (FFGIFFGALGGLLLLGVGTFV) traverse the membrane as a helical segment.

A heterodimeric complex, composed of a mucin-4 alpha chain and a cysteine-rich transmembrane mucin-4 beta chain. Mucin-4 beta chain interacts with ERBB2 via the EGF-like domain 1. In nonpolarized cells, associates with ERBB2 and ERBB3. In terms of processing, proteolytically cleaved into 2 chains, mucin-4 alpha chain and mucin-4 beta chain. Highly O-glycosylated. Post-translationally, is predominantly N-glycosylated. As to expression, expressed in the thymus, thyroid, lung, trachea, esophagus, stomach, small intestine, colon, testis, prostate, ovary, uterus, placenta, and mammary and salivary glands. Expressed in carcinomas arising from some of these epithelia, such as lung cancers, squamous cell carcinomas of the upper aerodigestive tract, mammary carcinomas, biliary tract, colon, and cervix cancers. Minimally or not expressed in the normal pancreas or chronic pancreatitis, but is highly expressed in pancreatic tumors and pancreatic tumor cell lines.

It localises to the cell membrane. The protein resides in the secreted. Functionally, membrane-bound mucin, a family of highly glycosylated proteins that constitute the major component of the mucus, the slimy and viscous secretion covering epithelial surfaces. These glycoproteins play important roles in the protection of the epithelium and are implicated in epithelial renewal and differentiation. Regulates cellular behavior through both anti-adhesive effects on cell-cell and cell-extracellular matrix interactions and its ability to act as an intramembrane ligand for ERBB2. Plays an important role in proliferation and differentiation of epithelial cells by inducing specific phosphorylation of ERBB2. In polarized epithelial cells, segregates ERBB2 and other ERBB receptors and prevents ERBB2 from acting as a coreceptor. The interaction with ERBB2 leads to enhanced expression of CDKN1B. The formation of a MUC4-ERBB2-ERBB3-NRG1 complex leads to down-regulation of CDKN1B, resulting in repression of apoptosis and stimulation of proliferation. Its ability to promote tumor growth may be mainly due to repression of apoptosis as opposed to proliferation. This Homo sapiens (Human) protein is Mucin-4 (MUC4).